The following is a 444-amino-acid chain: Nuclear distribution protein nudF (444 aa).

The LisH domain maps to 9 to 41 (QAEALHKAMLAYLSVINAPQTAETLREELHFDE). Positions 60–88 (TGIARLQRRINDLEAEVRSLQAELEASPS) form a coiled coil. Residues 83–107 (LEASPSAARAKNQDPTNWLPKPSST) form a disordered region. 7 WD repeats span residues 112–153 (SHRD…RTLK), 155–195 (HIRG…ANIR), 199–239 (GHDH…CVKV), 243–282 (ATES…PKAA), 285–345 (GHEN…IKTL), 347–386 (GHDN…RLVK), and 391–437 (AHEH…GCAD).

The protein belongs to the WD repeat LIS1/nudF family. Interacts with dynein. Self-associates. Interacts with bnfA, nudC and nudE.

It localises to the cytoplasm. The protein localises to the cytoskeleton. Its subcellular location is the spindle pole. In terms of biological role, positively regulates the activity of the minus-end directed microtubule motor protein dynein. May enhance dynein-mediated microtubule sliding by targeting dynein to the microtubule plus end. Required for nuclear migration during vegetative growth as well as development. Required for retrograde early endosome (EE) transport from the hyphal tip. Required for localization of dynein to the mitotic spindle poles. Recruits additional proteins to the dynein complex at SPBs. The sequence is that of Nuclear distribution protein nudF from Emericella nidulans (strain FGSC A4 / ATCC 38163 / CBS 112.46 / NRRL 194 / M139) (Aspergillus nidulans).